Reading from the N-terminus, the 288-residue chain is Ribosomal RNA small subunit methyltransferase A (288 aa).

Polar residues predominate over residues 1–14 (MSKNQGGNKHQGGS). A disordered region spans residues 1-21 (MSKNQGGNKHQGGSKTHLGHR). S-adenosyl-L-methionine-binding residues include Asn-29, Leu-31, Gly-56, Glu-77, Asp-102, and Asn-122.

The protein belongs to the class I-like SAM-binding methyltransferase superfamily. rRNA adenine N(6)-methyltransferase family. RsmA subfamily.

The protein localises to the cytoplasm. The catalysed reaction is adenosine(1518)/adenosine(1519) in 16S rRNA + 4 S-adenosyl-L-methionine = N(6)-dimethyladenosine(1518)/N(6)-dimethyladenosine(1519) in 16S rRNA + 4 S-adenosyl-L-homocysteine + 4 H(+). Functionally, specifically dimethylates two adjacent adenosines (A1518 and A1519) in the loop of a conserved hairpin near the 3'-end of 16S rRNA in the 30S particle. May play a critical role in biogenesis of 30S subunits. The polypeptide is Ribosomal RNA small subunit methyltransferase A (Idiomarina loihiensis (strain ATCC BAA-735 / DSM 15497 / L2-TR)).